The following is a 295-amino-acid chain: 4-diphosphocytidyl-2-C-methyl-D-erythritol kinase (295 aa).

Lysine 22 is an active-site residue. An ATP-binding site is contributed by 106 to 116; that stretch reads PAGGGFGGGSS. Residue aspartate 148 is part of the active site.

This sequence belongs to the GHMP kinase family. IspE subfamily.

It catalyses the reaction 4-CDP-2-C-methyl-D-erythritol + ATP = 4-CDP-2-C-methyl-D-erythritol 2-phosphate + ADP + H(+). The protein operates within isoprenoid biosynthesis; isopentenyl diphosphate biosynthesis via DXP pathway; isopentenyl diphosphate from 1-deoxy-D-xylulose 5-phosphate: step 3/6. Functionally, catalyzes the phosphorylation of the position 2 hydroxy group of 4-diphosphocytidyl-2C-methyl-D-erythritol. In Xanthomonas euvesicatoria pv. vesicatoria (strain 85-10) (Xanthomonas campestris pv. vesicatoria), this protein is 4-diphosphocytidyl-2-C-methyl-D-erythritol kinase.